We begin with the raw amino-acid sequence, 468 residues long: POC1 centriolar protein homolog B (468 aa).

WD repeat units lie at residues Gly-16–Lys-55, Gly-58–Val-97, Ala-100–Ser-139, Gln-142–Thr-181, Asp-184–His-223, Val-226–Thr-265, and Gly-268–Lys-307. Residues Asn-420–Lys-459 adopt a coiled-coil conformation.

This sequence belongs to the WD repeat POC1 family. In terms of assembly, interacts with pat. In terms of tissue distribution, highly expressed in ovary and, at low levels, in testis.

It localises to the cytoplasm. Its subcellular location is the cytoskeleton. The protein resides in the microtubule organizing center. The protein localises to the centrosome. It is found in the centriole. In terms of biological role, plays an important role in centriole assembly and/or stability and ciliogenesis. Involved in early steps of centriole duplication, as well as in the later steps of centriole length control. The polypeptide is POC1 centriolar protein homolog B (poc1b) (Xenopus laevis (African clawed frog)).